We begin with the raw amino-acid sequence, 95 residues long: Small ribosomal subunit protein uS19 (95 aa).

The protein belongs to the universal ribosomal protein uS19 family.

In terms of biological role, protein S19 forms a complex with S13 that binds strongly to the 16S ribosomal RNA. In Coxiella burnetii (strain CbuK_Q154) (Coxiella burnetii (strain Q154)), this protein is Small ribosomal subunit protein uS19.